A 381-amino-acid polypeptide reads, in one-letter code: Probable tRNA sulfurtransferase (381 aa).

One can recognise a THUMP domain in the interval R60–K168. ATP is bound by residues L186 to L187, K269, G291, and Q300.

The protein belongs to the ThiI family.

Its subcellular location is the cytoplasm. It carries out the reaction [ThiI sulfur-carrier protein]-S-sulfanyl-L-cysteine + a uridine in tRNA + 2 reduced [2Fe-2S]-[ferredoxin] + ATP + H(+) = [ThiI sulfur-carrier protein]-L-cysteine + a 4-thiouridine in tRNA + 2 oxidized [2Fe-2S]-[ferredoxin] + AMP + diphosphate. It catalyses the reaction [ThiS sulfur-carrier protein]-C-terminal Gly-Gly-AMP + S-sulfanyl-L-cysteinyl-[cysteine desulfurase] + AH2 = [ThiS sulfur-carrier protein]-C-terminal-Gly-aminoethanethioate + L-cysteinyl-[cysteine desulfurase] + A + AMP + 2 H(+). It participates in cofactor biosynthesis; thiamine diphosphate biosynthesis. Functionally, catalyzes the ATP-dependent transfer of a sulfur to tRNA to produce 4-thiouridine in position 8 of tRNAs, which functions as a near-UV photosensor. Also catalyzes the transfer of sulfur to the sulfur carrier protein ThiS, forming ThiS-thiocarboxylate. This is a step in the synthesis of thiazole, in the thiamine biosynthesis pathway. The sulfur is donated as persulfide by IscS. In Thermococcus kodakarensis (strain ATCC BAA-918 / JCM 12380 / KOD1) (Pyrococcus kodakaraensis (strain KOD1)), this protein is Probable tRNA sulfurtransferase.